The following is a 654-amino-acid chain: Broad substrate specificity ATP-binding cassette transporter ABCG2 (654 aa).

The Cytoplasmic segment spans residues 1 to 394 (MSSSNVEVFI…KNLLGNPQAS (394 aa)). An ABC transporter domain is found at 37–286 (LSFHNICYRV…FESAGYHCEA (250 aa)). ATP contacts are provided by residues 80-87 (GPTGGGKS), 184-190 (RGVSGGE), glutamate 211, and histidine 243. The ABC transmembrane type-2 domain occupies 388–650 (LGNPQASIAQ…TIAYLKLLFL (263 aa)). A helical membrane pass occupies residues 395–415 (IAQIIVTVILGLVIGAIYFGL). Residues 416-427 (NNDSTGIQNRAG) lie on the Extracellular side of the membrane. The N-linked (GlcNAc...) asparagine glycan is linked to asparagine 417. Residues 428 to 448 (VLFFLTTNQCFSSVSAVELFV) traverse the membrane as a helical segment. The Cytoplasmic segment spans residues 449-476 (VEKKLFIHEYISGYYRVSSYFFGKLLSD). A helical membrane pass occupies residues 477-497 (LLPMRMLPSIIFTCIVYFMLG). At 498-505 (LKPTADAF) the chain is on the extracellular side. Residues 506 to 526 (FIMMFTLMMVAYSASSMALAI) traverse the membrane as a helical segment. Over 527 to 534 (AAGQSVVS) the chain is Cytoplasmic. Residues 535-555 (VATLLMTICFVFMMIFSGLLV) traverse the membrane as a helical segment. 3 N-linked (GlcNAc...) asparagine glycosylation sites follow: asparagine 556, asparagine 595, and asparagine 599. At 556 to 629 (NLTTIASWLS…LSPWGLWKNH (74 aa)) the chain is on the extracellular side. Cysteine 591 and cysteine 607 are disulfide-bonded. Residues 630–650 (VALACMIVIFLTIAYLKLLFL) traverse the membrane as a helical segment. The Cytoplasmic segment spans residues 651–654 (KKYS).

Belongs to the ABC transporter superfamily. ABCG family. Eye pigment precursor importer (TC 3.A.1.204) subfamily. In terms of assembly, homodimer; disulfide-linked. The minimal functional unit is a homodimer, but the major oligomeric form in plasma membrane is a homotetramer with possibility of higher order oligomerization up to homododecamers. Post-translationally, N-glycosylated. Glycosylation-deficient ABCG2 is normally expressed and functional. In terms of processing, phosphorylated. Phosphorylation may regulate the localization to the plasma membrane, the homooligomerization and therefore, the activity of the transporter.

The protein resides in the cell membrane. The protein localises to the apical cell membrane. It localises to the mitochondrion membrane. The enzyme catalyses ATP + H2O + xenobioticSide 1 = ADP + phosphate + xenobioticSide 2.. It carries out the reaction urate(in) + ATP + H2O = urate(out) + ADP + phosphate + H(+). The catalysed reaction is indoxyl sulfate(in) + ATP + H2O = indoxyl sulfate(out) + ADP + phosphate + H(+). It catalyses the reaction sphing-4-enine 1-phosphate(in) + ATP + H2O = sphing-4-enine 1-phosphate(out) + ADP + phosphate + H(+). The enzyme catalyses estrone 3-sulfate(in) + ATP + H2O = estrone 3-sulfate(out) + ADP + phosphate + H(+). It carries out the reaction dehydroepiandrosterone 3-sulfate(in) + ATP + H2O = dehydroepiandrosterone 3-sulfate(out) + ADP + phosphate + H(+). The catalysed reaction is 4-methylumbelliferone sulfate(in) + ATP + H2O = 4-methylumbelliferone sulfate(out) + ADP + phosphate + H(+). It catalyses the reaction 5,7-dimethyl-2-methylamino-4-(3-pyridylmethyl)-1,3-benzothiazol-6-yl beta-D-glucuronate(in) + ATP + H2O = 5,7-dimethyl-2-methylamino-4-(3-pyridylmethyl)-1,3-benzothiazol-6-yl beta-D-glucuronate(out) + ADP + phosphate + H(+). The enzyme catalyses 4-methylumbelliferone beta-D-glucuronate(in) + ATP + H2O = 4-methylumbelliferone beta-D-glucuronate(out) + ADP + phosphate + H(+). It carries out the reaction 5,7-dimethyl-2-methylamino-4-(3-pyridylmethyl)-1,3-benzothiazol-6-yl sulfate(in) + ATP + H2O = 5,7-dimethyl-2-methylamino-4-(3-pyridylmethyl)-1,3-benzothiazol-6-yl sulfate(out) + ADP + phosphate + H(+). The catalysed reaction is 17beta-estradiol 17-O-(beta-D-glucuronate)(in) + ATP + H2O = 17beta-estradiol 17-O-(beta-D-glucuronate)(out) + ADP + phosphate + H(+). It catalyses the reaction methotrexate(in) + ATP + H2O = methotrexate(out) + ADP + phosphate + H(+). The enzyme catalyses riboflavin(in) + ATP + H2O = riboflavin(out) + ADP + phosphate + H(+). It carries out the reaction pheophorbide a(in) + ATP + H2O = pheophorbide a(out) + ADP + phosphate + H(+). The catalysed reaction is itaconate(in) + ATP + H2O = itaconate(out) + ADP + phosphate + H(+). Broad substrate specificity ATP-dependent transporter of the ATP-binding cassette (ABC) family that actively extrudes a wide variety of physiological compounds, dietary toxins and xenobiotics from cells. Involved in porphyrin homeostasis, mediating the export of protoporphyrin IX (PPIX) from both mitochondria to cytosol and cytosol to extracellular space, it also functions in the cellular export of heme. Also mediates the efflux of sphingosine-1-P from cells. Acts as a urate exporter functioning in both renal and extrarenal urate excretion. In kidney, it also functions as a physiological exporter of the uremic toxin indoxyl sulfate. Also involved in the excretion of steroids like estrone 3-sulfate/E1S, 3beta-sulfooxy-androst-5-en-17-one/DHEAS, and other sulfate conjugates. Mediates the secretion of the riboflavin and biotin vitamins into milk. Extrudes pheophorbide a, a phototoxic porphyrin catabolite of chlorophyll, reducing its bioavailability. Plays an important role in the exclusion of xenobiotics from the brain. It confers to cells a resistance to multiple drugs and other xenobiotics including mitoxantrone, pheophorbide, camptothecin, methotrexate, azidothymidine, and the anthracyclines daunorubicin and doxorubicin, through the control of their efflux. In placenta, it limits the penetration of drugs from the maternal plasma into the fetus. May play a role in early stem cell self-renewal by blocking differentiation. In inflammatory macrophages, exports itaconate from the cytosol to the extracellular compartment and limits the activation of TFEB-dependent lysosome biogenesis involved in antibacterial innate immune response. The polypeptide is Broad substrate specificity ATP-binding cassette transporter ABCG2 (ABCG2) (Macaca mulatta (Rhesus macaque)).